Here is a 603-residue protein sequence, read N- to C-terminus: UvrABC system protein C (603 aa).

A GIY-YIG domain is found at 17–94 (TTSGCYKMLN…IKTHKPDYNV (78 aa)). The 36-residue stretch at 199–234 (SEILSQIDIKLKLAVQKEDFETAIKLKEMKSSLIEI) folds into the UVR domain.

Belongs to the UvrC family. In terms of assembly, interacts with UvrB in an incision complex.

It is found in the cytoplasm. Functionally, the UvrABC repair system catalyzes the recognition and processing of DNA lesions. UvrC both incises the 5' and 3' sides of the lesion. The N-terminal half is responsible for the 3' incision and the C-terminal half is responsible for the 5' incision. In Borrelia garinii subsp. bavariensis (strain ATCC BAA-2496 / DSM 23469 / PBi) (Borreliella bavariensis), this protein is UvrABC system protein C.